The following is a 506-amino-acid chain: Cytochrome P450 monooxygenase tpcB (506 aa).

Cys450 lines the heme pocket.

It belongs to the cytochrome P450 family. Heme is required as a cofactor.

It participates in secondary metabolite biosynthesis; terpenoid biosynthesis. Functionally, cytochrome P450 monooxygenase; part of the gene cluster that mediates the biosynthesis of terpestacin. The bifunctional terpene synthase tpcA converts isopentenyl diphosphate (IPP) and dimethylallyl diphosphate (DMAPP) into the sesterterpene preterpestacin I. The C-terminal prenyltransferase (PT) domain of tpcA catalyzes formation of GFPP, whereas the N-terminal terpene cyclase (TC) domain catalyzes the cyclization of GFPP into preterpestacin I. The cytochrome P450 monooxygenase tpcB then hydroxylates preterpestacin I to yield 24-hydroxypreterpstacin I (renamed as preterpestacin II) whereas the cytochrome P450 monooxygenase tpcC further hydroxylates preterpestacin II to yield 16,17-dihydroxypreterpestacin II (renamed as preterpestacin III). Finally, the FAD-dependent monooxygenase tpcD converts preterpestacin III into terpestacin. The chain is Cytochrome P450 monooxygenase tpcB from Cochliobolus heterostrophus (strain C5 / ATCC 48332 / race O) (Southern corn leaf blight fungus).